The chain runs to 727 residues: Cyclin-T1 (727 aa).

Position 117 is a phosphoserine (Ser-117). Residues 253-270 (KRIRNWRACQAAKKTKAD) carry the Nuclear localization signal, and interaction with Tat-TAR RNA motif. Over residues 302 to 322 (MSTSSTTSTVPSLPTTEESSS) the composition is skewed to low complexity. The disordered stretch occupies residues 302-326 (MSTSSTTSTVPSLPTTEESSSNLSG). Lys-343 is covalently cross-linked (Glycyl lysine isopeptide (Lys-Gly) (interchain with G-Cter in SUMO2)). A coiled-coil region spans residues 386-427 (SAKVSLKEYRAKHAEELAAQKRQLENMEANVKSQYAYAAQNL). Ser-390 is modified (phosphoserine). Lys-392 bears the N6-acetyllysine mark. Lys-417 is covalently cross-linked (Glycyl lysine isopeptide (Lys-Gly) (interchain with G-Cter in SUMO2)). ADP-ribosylserine occurs at positions 418, 476, and 477. The interval 482–552 (IKMRIKVHAA…RPGDPKHSSQ (71 aa)) is histidine-rich domain (HRD). Lys-483 participates in a covalent cross-link: Glycyl lysine isopeptide (Lys-Gly) (interchain with G-Cter in SUMO2). Over residues 486 to 508 (IKVHAAPDKHNSIDDSVTKSREH) the composition is skewed to basic and acidic residues. Disordered regions lie at residues 486-591 (IKVH…DHPA) and 692-727 (LNPR…PLPK). An N6-(ADP-ribosyl)lysine modification is found at Lys-487. His-489 carries the ADP-ribosylhistidine modification. Ser-497 and Ser-501 each carry phosphoserine. A compositionally biased stretch (basic residues) spans 509–532 (KEKHKTHPSNHHHHHNHHSHKHSH). His-532 carries the post-translational modification ADP-ribosylhistidine. ADP-ribosylserine is present on residues Ser-533, Ser-551, and Ser-554. An ADP-ribosylhistidine modification is found at His-558. Over residues 562–572 (SLSSSFSSSSS) the composition is skewed to low complexity. The residue at position 565 (Ser-565) is an ADP-ribosylserine. A Phosphoserine modification is found at Ser-566. Over residues 711-727 (LPPLPSEPPPPLPPLPK) the composition is skewed to pro residues.

The protein belongs to the cyclin family. Cyclin C subfamily. In terms of assembly, cyclin-T1 is the predominant cyclin that associates with CDK9 to form a heterodimer called P-TEFb. P-TEFb forms a complex with AFF4/AF5Q31. Component of a complex which is at least composed of HTATSF1/Tat-SF1, P-TEFb complex, RNA pol II, SUPT5H, and NCL/nucleolin. Component of the 7SK snRNP complex at least composed of P-TEFb (composed of CDK9 and CCNT1/cyclin-T1), HEXIM1, HEXIM2, BCDIN3, SART3 proteins and 7SK and U6 snRNAs. Interacts (via central region) with ZMYND8 (via N-terminus); the interaction is direct and the association appears to occur between homodimeric ZMYND8 and the activated form of the P-TEFb complex. Interacts with BRD4, targets chromatin binding. Interacts with JMJD6. Interacts with MDFIC. Interacts with HSF1. Interacts with HTATSF1. Interacts with TBX21. Post-translationally, ADP-ribosylation on serine residues by PARP1 in response to DNA damage disrupts the phase separation activity of CCNT1, thereby preventing activation of CDK9.

Its subcellular location is the nucleus. In terms of biological role, regulatory subunit of the cyclin-dependent kinase pair (CDK9/cyclin-T1) complex, also called positive transcription elongation factor B (P-TEFb), which facilitates the transition from abortive to productive elongation by phosphorylating the CTD (C-terminal domain) of the large subunit of RNA polymerase II (RNA Pol II). Required to activate the protein kinase activity of CDK9: acts by mediating formation of liquid-liquid phase separation (LLPS) that enhances binding of P-TEFb to the CTD of RNA Pol II. In Equus caballus (Horse), this protein is Cyclin-T1 (CCNT1).